We begin with the raw amino-acid sequence, 356 residues long: Histidinol-phosphate aminotransferase 1 (356 aa).

K217 bears the N6-(pyridoxal phosphate)lysine mark.

It belongs to the class-II pyridoxal-phosphate-dependent aminotransferase family. Histidinol-phosphate aminotransferase subfamily. In terms of assembly, homodimer. Pyridoxal 5'-phosphate is required as a cofactor.

It catalyses the reaction L-histidinol phosphate + 2-oxoglutarate = 3-(imidazol-4-yl)-2-oxopropyl phosphate + L-glutamate. The protein operates within amino-acid biosynthesis; L-histidine biosynthesis; L-histidine from 5-phospho-alpha-D-ribose 1-diphosphate: step 7/9. The sequence is that of Histidinol-phosphate aminotransferase 1 from Burkholderia mallei (strain ATCC 23344).